The sequence spans 67 residues: Large ribosomal subunit protein uL30 (67 aa).

This sequence belongs to the universal ribosomal protein uL30 family. Part of the 50S ribosomal subunit.

This Sinorhizobium medicae (strain WSM419) (Ensifer medicae) protein is Large ribosomal subunit protein uL30.